The primary structure comprises 324 residues: Homoserine kinase (324 aa).

ATP is bound at residue proline 87–alanine 97.

It belongs to the GHMP kinase family. Homoserine kinase subfamily.

It localises to the cytoplasm. It catalyses the reaction L-homoserine + ATP = O-phospho-L-homoserine + ADP + H(+). It functions in the pathway amino-acid biosynthesis; L-threonine biosynthesis; L-threonine from L-aspartate: step 4/5. Functionally, catalyzes the ATP-dependent phosphorylation of L-homoserine to L-homoserine phosphate. This Symbiobacterium thermophilum (strain DSM 24528 / JCM 14929 / IAM 14863 / T) protein is Homoserine kinase.